Here is a 53-residue protein sequence, read N- to C-terminus: Small ribosomal subunit protein uS14 (53 aa).

Residues Cys-17, Cys-20, Cys-36, and Cys-39 each coordinate Zn(2+).

The protein belongs to the universal ribosomal protein uS14 family. Zinc-binding uS14 subfamily. As to quaternary structure, part of the 30S ribosomal subunit. Requires Zn(2+) as cofactor.

In terms of biological role, binds 16S rRNA, required for the assembly of 30S particles. The sequence is that of Small ribosomal subunit protein uS14 from Methanococcus maripaludis (strain DSM 14266 / JCM 13030 / NBRC 101832 / S2 / LL).